The primary structure comprises 106 residues: Putative double-stranded DNA mimic protein VV1228 (106 aa).

Belongs to the putative dsDNA mimic protein family.

Its function is as follows. May act as a double-stranded DNA (dsDNA) mimic. Probably regulates the activity of a dsDNA-binding protein. The polypeptide is Putative double-stranded DNA mimic protein VV1228 (Vibrio vulnificus (strain YJ016)).